The following is a 275-amino-acid chain: Chlorobenzene dihydrodiol dehydrogenase (275 aa).

The Proton acceptor role is filled by Tyr155.

It belongs to the short-chain dehydrogenases/reductases (SDR) family.

The catalysed reaction is (1R,2R)-3-chlorocyclohexa-3,5-diene-1,2-diol + NAD(+) = 3-chlorocatechol + NADH + H(+). The protein operates within aromatic compound metabolism. Its function is as follows. Can transform various dihydrodiols of chlorobenzenes and chlorotoluenes into the respective catechols. The chain is Chlorobenzene dihydrodiol dehydrogenase from Cupriavidus sp. (strain PS12).